The chain runs to 426 residues: MANDSGGPGGPSPSERDRQYCELCGKMENLLRCSRCRSSFYCCKEHQRQDWKKHKLVCQGSEGALGHGVGPHQHSGPAPPAAVPPPRAGAREPRKAAARRDNASGDAAKGKVKAKPPADPAAAASPCRAAAGGQGSAVAAEAEPGKEEPPARSSLFQEKANLYPPSNTPGDALSPGGGLRPNGQTKPLPALKLALEYIVPCMNKHGICVVDDFLGKETGQQIGDEVRALHDTGKFTDGQLVSQKSDSSKDIRGDKITWIEGKEPGCETIGLLMSSMDDLIRHCNGKLGSYKINGRTKAMVACYPGNGTGYVRHVDNPNGDGRCVTCIYYLNKDWDAKVSGGILRIFPEGKAQFADIEPKFDRLLFFWSDRRNPHEVQPAYATRYAITVWYFDADERARAKVKYLTGEKGVRVELNKPSDSVGKDVF.

An N-acetylalanine modification is found at A2. Residues 6-20 (GGPGGPSPSERDRQY) are required for nuclear export. Residue S12 is modified to Phosphoserine. Residues C21, C24, C33, C36, C42, H46, H54, and C58 each contribute to the Zn(2+) site. The MYND-type; atypical zinc finger occupies 21-58 (CELCGKMENLLRCSRCRSSFYCCKEHQRQDWKKHKLVC). Disordered regions lie at residues 65 to 129 (LGHG…PCRA) and 160 to 184 (ANLYPPSNTPGDALSPGGGLRPNGQ). Residues 77–87 (PAPPAAVPPPR) show a composition bias toward pro residues. Residues 89-103 (GAREPRKAAARRDNA) are compositionally biased toward basic and acidic residues. The segment covering 120-129 (PAAAASPCRA) has biased composition (low complexity). S125 is modified (phosphoserine). S-nitrosocysteine is present on residues C201 and C208. The interval 241–251 (VSQKSDSSKDI) is beta(2)beta(3) 'finger-like' loop. One can recognise a Fe2OG dioxygenase domain in the interval 291 to 392 (KINGRTKAMV…RYAITVWYFD (102 aa)). At C302 the chain carries S-nitrosocysteine. Fe cation-binding residues include H313 and D315. S-nitrosocysteine is present on residues C323 and C326. H374 lines the Fe cation pocket. R383 contacts 2-oxoglutarate.

As to quaternary structure, monomer. Interacts with ING4; the interaction inhibits the hydroxylation of HIF alpha proteins. Interacts with PTGES3 (via PXLE motif); thereby recruiting EGLN1 to the HSP90 pathway to facilitate HIF alpha proteins hydroxylation. Interacts with LIMD1. Found in a complex composed of LIMD1, VHL, EGLN1/PHD2, ELOB and CUL2. Interacts with EPAS1. Interacts with CBFA2T3. Interacts with HIF1A. The cofactor is Fe(2+). L-ascorbate is required as a cofactor. S-nitrosylation inhibits the enzyme activity up to 60% under aerobic conditions. Chelation of Fe(2+) has no effect on the S-nitrosylation. It is uncertain whether nitrosylation occurs on Cys-323 or Cys-326. As to expression, according to PubMed:11056053, widely expressed with highest levels in skeletal muscle and heart, moderate levels in pancreas, brain (dopaminergic neurons of adult and fetal substantia nigra) and kidney, and lower levels in lung and liver. According to PubMed:12351678 widely expressed with highest levels in brain, kidney and adrenal gland. Expressed in cardiac myocytes, aortic endothelial cells and coronary artery smooth muscle. According to PubMed:12788921; expressed in adult and fetal heart, brain, liver, lung, skeletal muscle and kidney. Also expressed in placenta. Highest levels in adult heart, brain, lung and liver and fetal brain, heart spleen and skeletal muscle.

The protein resides in the cytoplasm. The protein localises to the nucleus. It catalyses the reaction L-prolyl-[hypoxia-inducible factor alpha subunit] + 2-oxoglutarate + O2 = trans-4-hydroxy-L-prolyl-[hypoxia-inducible factor alpha subunit] + succinate + CO2. Following exposure to hypoxia, activated in HeLa cells but not in cardiovascular cells. Its function is as follows. Cellular oxygen sensor that catalyzes, under normoxic conditions, the post-translational formation of 4-hydroxyproline in hypoxia-inducible factor (HIF) alpha proteins. Hydroxylates a specific proline found in each of the oxygen-dependent degradation (ODD) domains (N-terminal, NODD, and C-terminal, CODD) of HIF1A. Also hydroxylates HIF2A. Has a preference for the CODD site for both HIF1A and HIF1B. Hydroxylated HIFs are then targeted for proteasomal degradation via the von Hippel-Lindau ubiquitination complex. Under hypoxic conditions, the hydroxylation reaction is attenuated allowing HIFs to escape degradation resulting in their translocation to the nucleus, heterodimerization with HIF1B, and increased expression of hypoxy-inducible genes. EGLN1 is the most important isozyme under normoxia and, through regulating the stability of HIF1, involved in various hypoxia-influenced processes such as angiogenesis in retinal and cardiac functionality. Target proteins are preferentially recognized via a LXXLAP motif. This Homo sapiens (Human) protein is Egl nine homolog 1.